Consider the following 983-residue polypeptide: Anion exchange protein 4 (983 aa).

Positions methionine 1–leucine 48 are disordered. Asparagine 183 is a glycosylation site (N-linked (GlcNAc...) asparagine). 2 disordered regions span residues threonine 186 to glutamate 205 and arginine 332 to alanine 357. A run of 4 helical transmembrane segments spans residues alanine 415 to glycine 435, glycine 443 to glycine 463, valine 500 to valine 520, and glycine 530 to leucine 550. A membrane (anion exchange) region spans residues alanine 415–asparagine 983. 2 N-linked (GlcNAc...) asparagine glycosylation sites follow: asparagine 576 and asparagine 600. Transmembrane regions (helical) follow at residues valine 624–alanine 644, phenylalanine 665–threonine 685, proline 712–methionine 732, leucine 758–serine 778, glycine 815–isoleucine 835, methionine 837–phenylalanine 857, and leucine 899–valine 919. Residues arginine 946–histidine 957 show a composition bias toward basic and acidic residues. Residues arginine 946–asparagine 983 are disordered. Residue asparagine 979 is glycosylated (N-linked (GlcNAc...) asparagine).

The protein belongs to the anion exchanger (TC 2.A.31) family. In terms of tissue distribution, kidney specific.

The protein resides in the basolateral cell membrane. It carries out the reaction 2 hydrogencarbonate(out) + chloride(in) + Na(+)(out) = 2 hydrogencarbonate(in) + chloride(out) + Na(+)(in). The enzyme catalyses K(+)(in) + 2 hydrogencarbonate(in) + chloride(out) = K(+)(out) + 2 hydrogencarbonate(out) + chloride(in). It catalyses the reaction Li(+)(in) + 2 hydrogencarbonate(in) + chloride(out) = Li(+)(out) + 2 hydrogencarbonate(out) + chloride(in). The catalysed reaction is Rb(+)(in) + 2 hydrogencarbonate(in) + chloride(out) = Rb(+)(out) + 2 hydrogencarbonate(out) + chloride(in). It carries out the reaction Cs(+)(in) + 2 hydrogencarbonate(in) + chloride(out) = Cs(+)(out) + 2 hydrogencarbonate(out) + chloride(in). Electroneutral Cl(-)/HCO3(-) antiporter that favors chloride ion entry and efflux of hydrogencarbonate and sodium ion across the basolateral membrane and may participate in salivary secretion. Also mediates Cl(-)/HCO3(-) exchange activity in the presence of K(+) as well as Cs(+), Li(+), and Rb(+). Does not contribute to Cl(-)/HCO3(-) exchanger in the apical membrane of the upper villous epithelium. This Homo sapiens (Human) protein is Anion exchange protein 4.